The sequence spans 242 residues: Haloacid dehalogenase-like hydrolase domain-containing protein 3 (242 aa).

It belongs to the HAD-like hydrolase superfamily.

The sequence is that of Haloacid dehalogenase-like hydrolase domain-containing protein 3 (hdhd3) from Danio rerio (Zebrafish).